We begin with the raw amino-acid sequence, 491 residues long: Cysteine--tRNA ligase (491 aa).

C31 contacts Zn(2+). Positions 33–43 (PTVYGDAHLGH) match the 'HIGH' region motif. Residues C226, H251, and E255 each coordinate Zn(2+). A 'KMSKS' region motif is present at residues 283 to 287 (KMGKS). ATP is bound at residue K286.

It belongs to the class-I aminoacyl-tRNA synthetase family. Monomer. Zn(2+) serves as cofactor.

Its subcellular location is the cytoplasm. It carries out the reaction tRNA(Cys) + L-cysteine + ATP = L-cysteinyl-tRNA(Cys) + AMP + diphosphate. The chain is Cysteine--tRNA ligase from Parabacteroides distasonis (strain ATCC 8503 / DSM 20701 / CIP 104284 / JCM 5825 / NCTC 11152).